We begin with the raw amino-acid sequence, 101 residues long: Putative septation protein SpoVG (101 aa).

This sequence belongs to the SpoVG family.

Functionally, could be involved in septation. The sequence is that of Putative septation protein SpoVG from Anaeromyxobacter dehalogenans (strain 2CP-C).